The following is a 307-amino-acid chain: Small ribosomal subunit biogenesis GTPase RsgA (307 aa).

The CP-type G domain occupies 78–240 (HKTAFGHLIA…VIDTPGIKEL (163 aa)). GTP-binding positions include 128–131 (NKSD) and 182–190 (GHSGVGKST). Zn(2+) contacts are provided by Cys-264, Cys-269, His-271, and Cys-277.

This sequence belongs to the TRAFAC class YlqF/YawG GTPase family. RsgA subfamily. Monomer. Associates with 30S ribosomal subunit, binds 16S rRNA. Requires Zn(2+) as cofactor.

It localises to the cytoplasm. In terms of biological role, one of several proteins that assist in the late maturation steps of the functional core of the 30S ribosomal subunit. Helps release RbfA from mature subunits. May play a role in the assembly of ribosomal proteins into the subunit. Circularly permuted GTPase that catalyzes slow GTP hydrolysis, GTPase activity is stimulated by the 30S ribosomal subunit. This is Small ribosomal subunit biogenesis GTPase RsgA from Cytophaga hutchinsonii (strain ATCC 33406 / DSM 1761 / CIP 103989 / NBRC 15051 / NCIMB 9469 / D465).